A 205-amino-acid polypeptide reads, in one-letter code: Cytochrome bo(3) ubiquinol oxidase subunit 3 (205 aa).

At 1 to 26 the chain is on the cytoplasmic side; it reads MIENKFNNTILNSNSSTHDKISETKK. A helical transmembrane segment spans residues 27–47; sequence LFGLWIYLMSDCIMFAVLFAV. At 48 to 69 the chain is on the extracellular side; it reads YAIVSSNISINLISNKIFNLSS. Residues 70–90 form a helical membrane-spanning segment; the sequence is ILLETFLLLLSSLSCGFVVIA. Residues 91–97 lie on the Cytoplasmic side of the membrane; the sequence is MNQKRIK. A helical transmembrane segment spans residues 98–118; the sequence is MIYSFLTITFIFGLIFLLMEV. Over 119-138 the chain is Extracellular; that stretch reads HEFYELIIENFGPDKNAFFS. Residues 139-159 traverse the membrane as a helical segment; the sequence is IFFTLVATHGVHIFFGLILIL. Residues 160–177 lie on the Cytoplasmic side of the membrane; the sequence is SILYQIKKLGLTNSIRTR. Residues 178–198 traverse the membrane as a helical segment; the sequence is ILCFSVFWHFLDIIWICVFTF. Residues 199 to 205 lie on the Extracellular side of the membrane; it reads VYLNGAI.

Belongs to the cytochrome c oxidase subunit 3 family. Heterooctamer of two A chains, two B chains, two C chains and two D chains.

The protein resides in the cell membrane. In terms of biological role, cytochrome bo(3) ubiquinol terminal oxidase is the component of the aerobic respiratory chain of E.coli that predominates when cells are grown at high aeration. Has proton pump activity across the membrane in addition to electron transfer, pumping 2 protons/electron. In Buchnera aphidicola subsp. Acyrthosiphon pisum (strain APS) (Acyrthosiphon pisum symbiotic bacterium), this protein is Cytochrome bo(3) ubiquinol oxidase subunit 3 (cyoC).